A 132-amino-acid polypeptide reads, in one-letter code: Small ribosomal subunit protein uS8 (132 aa).

It belongs to the universal ribosomal protein uS8 family. Part of the 30S ribosomal subunit. Contacts proteins S5 and S12.

Its function is as follows. One of the primary rRNA binding proteins, it binds directly to 16S rRNA central domain where it helps coordinate assembly of the platform of the 30S subunit. The protein is Small ribosomal subunit protein uS8 of Streptococcus agalactiae serotype Ia (strain ATCC 27591 / A909 / CDC SS700).